We begin with the raw amino-acid sequence, 209 residues long: Large ribosomal subunit protein uL3 (209 aa).

A disordered region spans residues 127 to 151 (SGGPSSHGSKFHRHLGGTGQATTPA).

The protein belongs to the universal ribosomal protein uL3 family. In terms of assembly, part of the 50S ribosomal subunit. Forms a cluster with proteins L14 and L19.

In terms of biological role, one of the primary rRNA binding proteins, it binds directly near the 3'-end of the 23S rRNA, where it nucleates assembly of the 50S subunit. The protein is Large ribosomal subunit protein uL3 of Borrelia turicatae (strain 91E135).